Reading from the N-terminus, the 164-residue chain is Kunitz-type serine protease inhibitor BbKI (164 aa).

The protein belongs to the protease inhibitor I3 (leguminous Kunitz-type inhibitor) family. In terms of assembly, monomer.

The protein localises to the secreted. Functionally, inhibits bovine trypsin, human plasma kallikrein and plasmin and weakly bovine chymotrypsin. The protein is Kunitz-type serine protease inhibitor BbKI of Bauhinia bauhinioides (Perlebia bauhinoides).